Consider the following 155-residue polypeptide: SsrA-binding protein (155 aa).

This sequence belongs to the SmpB family.

Its subcellular location is the cytoplasm. Functionally, required for rescue of stalled ribosomes mediated by trans-translation. Binds to transfer-messenger RNA (tmRNA), required for stable association of tmRNA with ribosomes. tmRNA and SmpB together mimic tRNA shape, replacing the anticodon stem-loop with SmpB. tmRNA is encoded by the ssrA gene; the 2 termini fold to resemble tRNA(Ala) and it encodes a 'tag peptide', a short internal open reading frame. During trans-translation Ala-aminoacylated tmRNA acts like a tRNA, entering the A-site of stalled ribosomes, displacing the stalled mRNA. The ribosome then switches to translate the ORF on the tmRNA; the nascent peptide is terminated with the 'tag peptide' encoded by the tmRNA and targeted for degradation. The ribosome is freed to recommence translation, which seems to be the essential function of trans-translation. This is SsrA-binding protein from Streptococcus pyogenes serotype M4 (strain MGAS10750).